We begin with the raw amino-acid sequence, 261 residues long: Segregation and condensation protein A (261 aa).

This sequence belongs to the ScpA family. In terms of assembly, component of a cohesin-like complex composed of ScpA, ScpB and the Smc homodimer, in which ScpA and ScpB bind to the head domain of Smc. The presence of the three proteins is required for the association of the complex with DNA.

The protein resides in the cytoplasm. In terms of biological role, participates in chromosomal partition during cell division. May act via the formation of a condensin-like complex containing Smc and ScpB that pull DNA away from mid-cell into both cell halves. The protein is Segregation and condensation protein A of Leptospira interrogans serogroup Icterohaemorrhagiae serovar copenhageni (strain Fiocruz L1-130).